Consider the following 396-residue polypeptide: 1-deoxy-D-xylulose 5-phosphate reductoisomerase (396 aa).

Residues Thr13, Gly14, Ser15, Ile16, and Asn127 each contribute to the NADPH site. A 1-deoxy-D-xylulose 5-phosphate-binding site is contributed by Lys128. Glu129 contributes to the NADPH binding site. Residue Asp153 participates in Mn(2+) binding. Residues Ser154, Glu155, Ser184, and His207 each contribute to the 1-deoxy-D-xylulose 5-phosphate site. Glu155 lines the Mn(2+) pocket. Position 213 (Gly213) interacts with NADPH. 1-deoxy-D-xylulose 5-phosphate-binding residues include Ser220, Asn225, Lys226, and Glu229. Glu229 is a Mn(2+) binding site.

This sequence belongs to the DXR family. Mg(2+) is required as a cofactor. The cofactor is Mn(2+).

It catalyses the reaction 2-C-methyl-D-erythritol 4-phosphate + NADP(+) = 1-deoxy-D-xylulose 5-phosphate + NADPH + H(+). Its pathway is isoprenoid biosynthesis; isopentenyl diphosphate biosynthesis via DXP pathway; isopentenyl diphosphate from 1-deoxy-D-xylulose 5-phosphate: step 1/6. Its function is as follows. Catalyzes the NADPH-dependent rearrangement and reduction of 1-deoxy-D-xylulose-5-phosphate (DXP) to 2-C-methyl-D-erythritol 4-phosphate (MEP). The sequence is that of 1-deoxy-D-xylulose 5-phosphate reductoisomerase from Pseudomonas fluorescens (strain ATCC BAA-477 / NRRL B-23932 / Pf-5).